Consider the following 1265-residue polypeptide: Kinesin-like protein Klp98A (1265 aa).

Positions 3–364 (SLKVAVRVRP…LRYANRAKNI (362 aa)) constitute a Kinesin motor domain. An ATP-binding site is contributed by 100 to 107 (GQTGSGKT). Disordered regions lie at residues 597–621 (GASP…DPEL), 828–864 (EAES…DVSK), and 884–954 (VSSP…CTPS). Coiled coils occupy residues 619–670 (PELQ…EEMD) and 768–848 (AQFI…LGNK). Composition is skewed to polar residues over residues 846 to 857 (GNKSMSTSTSTN), 884 to 901 (VSSP…SNCS), and 917 to 927 (SGSSEETSRTC). A compositionally biased stretch (gly residues) spans 933-946 (SGSGSGSVGIGGSG). A coiled-coil region spans residues 1035 to 1071 (DLNKAQLDEHIADLQDLQRRYIQMEQEMLQSVQDLEA). The 131-residue stretch at 1129–1259 (GEHFITIPSF…SFFKKGLFEN (131 aa)) folds into the PX domain.

It belongs to the TRAFAC class myosin-kinesin ATPase superfamily. Kinesin family. Interacts with Atg8a and Rab14.

The protein localises to the early endosome. Its function is as follows. Plus end-directed motor protein involved in asymmetric cell division of sensory organ precursor (SOP) cells by playing a role in the asymmetric localization of Sara-expressing endosomes to the pIIa daughter cell but not to the pIIb cell. Targets Sara-expressing endosomes to the central spindle which is symmetrically arranged in early cell division. During late cytokinesis, central spindle asymmetry is generated by enrichment of Patronin on the pIIb side which protects microtubules from depolymerization by Klp10A while unprotected microtubules on the pIIa side are disassembled by Klp10A, leading to the asymmetric delivery of Sara-expressing endosomes to the pIIa daughter cell. Also plays a role in regulation of autophagosome formation, fusion and positioning and is required for normal localization of Rab14. The polypeptide is Kinesin-like protein Klp98A (Drosophila melanogaster (Fruit fly)).